Here is an 865-residue protein sequence, read N- to C-terminus: ABC transporter ATP-binding/permease protein Rv1747 (865 aa).

In terms of domain architecture, FHA 1 spans 29–78 (VVVGRDLRADVRVAHPLISRAHLLLRFDQGRWVAIDNGSLNGLYLNNRRV). Residues 104-205 (GRHRGSAGRP…PAGARGGTEA (102 aa)) are disordered. The segment covering 135 to 156 (PQTGTLGSGQLQQLPPATTRIP) has biased composition (low complexity). Position 152 is a phosphothreonine (threonine 152). The span at 157-166 (AAPPSGPQPR) shows a compositional bias: pro residues. Threonine 210 carries the phosphothreonine modification. Positions 230–279 (VRIGRANDNDIVIPEVLASRHHATLVPTPGGTEIRDNRSINGTFVNGARV) constitute an FHA 2 domain. Positions 319–552 (LDVRGVTWTI…VMGTTNWADI (234 aa)) constitute an ABC transporter domain. 352–359 (GPSGAGKS) serves as a coordination point for ATP. One can recognise an ABC transmembrane type-2 domain in the interval 596–810 (RQFSTIARRQ…TPARWGFAAS (215 aa)). Transmembrane regions (helical) follow at residues 614–634 (GYFV…MSVP), 652–672 (PGQI…ALTI), 700–720 (VCVY…IVLV), 740–760 (FVDV…LSAI), 767–787 (IMPL…GMIP), and 836–856 (SAWW…VGFV).

The protein in the central section; belongs to the ABC transporter superfamily. This sequence in the C-terminal section; belongs to the ABC-2 integral membrane protein family. In terms of assembly, homodimer. Interacts with PknF. In terms of processing, phosphorylated by PknF. Can probably be phosphorylated in vivo by other kinases when PknF is missing.

Its subcellular location is the cell membrane. Its activity is regulated as follows. Function is positively regulated by phosphorylation. Functionally, involved in the translocation of an unknown substrate across the membrane. Transmembrane domains (TMD) form a pore in the membrane and the ATP-binding domain (NBD) is responsible for energy generation. Required for virulence. In Mycobacterium tuberculosis (strain ATCC 25618 / H37Rv), this protein is ABC transporter ATP-binding/permease protein Rv1747.